The chain runs to 304 residues: MVAPSQFKQLEKVGNGTYATVYKGLNKTTGVYVALKEVKLDSEEGTPSTAIREISLMKELKHDNIVRLFDVIHTENKLTLVFEFMDNDLKKFMDNRNKGNSHKGLEMDLVKYFQWQLLQGVAFCHENRILHRDLKPQNLLINNRGQLKLGDFGLARAFGIPVNTFSSEVVTLWYRAPDVLMGSRNYCTSIDIWSCGCILAEMIMGKPLFPGSNDEEQLKLIFDTMGTPVEQTWPQVTQLAKYNPLLPPHMPRDLKQLLQNNTEEVLDDNVVDLLHGLLQLNPDARLSAKDALNHPWFAEYNHAN.

Positions 7–297 (FKQLEKVGNG…AKDALNHPWF (291 aa)) constitute a Protein kinase domain. Residues 13–21 (VGNGTYATV) and K36 each bind ATP. Catalysis depends on D133, which acts as the Proton acceptor.

The protein belongs to the protein kinase superfamily. CMGC Ser/Thr protein kinase family. CDC2/CDKX subfamily. In terms of assembly, interacts with a number of cyclins.

It catalyses the reaction L-seryl-[protein] + ATP = O-phospho-L-seryl-[protein] + ADP + H(+). It carries out the reaction L-threonyl-[protein] + ATP = O-phospho-L-threonyl-[protein] + ADP + H(+). In terms of biological role, when phosphate concentrations are high it phosphorylates the PHO4 transcription factor thus establishing repression. The polypeptide is Negative regulator of the PHO system (PHO85) (Kluyveromyces lactis (strain ATCC 8585 / CBS 2359 / DSM 70799 / NBRC 1267 / NRRL Y-1140 / WM37) (Yeast)).